The primary structure comprises 777 residues: uncharacterized protein (777 aa).

Disordered stretches follow at residues 1–101 (MNNN…NLSN), 128–150 (SYNN…NDDN), 219–267 (HHIH…NNMN), 334–366 (SLPF…GIDD), 391–466 (ISNS…ATIS), 529–577 (KNLN…NNKG), 590–622 (LAQE…ISTI), and 713–751 (EKQG…KWKP). Low complexity-rich tracts occupy residues 128–147 (SYNN…NNIN) and 243–265 (NNNN…NHNN). A compositionally biased stretch (polar residues) spans 334–343 (SLPFSSLSDN). A compositionally biased stretch (acidic residues) spans 344–366 (NGDDDDDGIDDGIDDGIDDGIDD). A compositionally biased stretch (polar residues) spans 391-407 (ISNSFHQNQSPCNNSFK). 2 stretches are compositionally biased toward low complexity: residues 408 to 466 (NNNN…ATIS) and 532 to 574 (NNNN…NNKN). The span at 597 to 606 (EQNKTKKELE) shows a compositional bias: basic and acidic residues. 2 stretches are compositionally biased toward acidic residues: residues 607 to 620 (EVKE…EEIS) and 718 to 730 (DDPE…DSDS). Residues 731 to 740 (DSNSNSDSSD) show a composition bias toward low complexity.

This is an uncharacterized protein from Dictyostelium discoideum (Social amoeba).